A 228-amino-acid polypeptide reads, in one-letter code: Dolichyl-phosphate hexose transferase HVO_1613 (228 aa).

This sequence belongs to the glycosyltransferase 2 family.

Glycosyltransferase that adds a monosaccharide to dolichol phosphate, thereby being responsible for generating one of the three monosaccharide-modified dolichol phosphates. The subunit onto which additional sugars are added is not known. This chain is Dolichyl-phosphate hexose transferase HVO_1613, found in Haloferax volcanii (strain ATCC 29605 / DSM 3757 / JCM 8879 / NBRC 14742 / NCIMB 2012 / VKM B-1768 / DS2) (Halobacterium volcanii).